The chain runs to 252 residues: Zinc import ATP-binding protein ZnuC (252 aa).

The 216-residue stretch at 5 to 220 (VTLNKISVTF…PEFIAMFGQR (216 aa)) folds into the ABC transporter domain. 37 to 44 (GPNGAGKS) lines the ATP pocket.

It belongs to the ABC transporter superfamily. Zinc importer (TC 3.A.1.15.5) family. In terms of assembly, the complex is composed of two ATP-binding proteins (ZnuC), two transmembrane proteins (ZnuB) and a solute-binding protein (ZnuA).

The protein resides in the cell inner membrane. The enzyme catalyses Zn(2+)(out) + ATP(in) + H2O(in) = Zn(2+)(in) + ADP(in) + phosphate(in) + H(+)(in). Part of the ABC transporter complex ZnuABC involved in zinc import. Responsible for energy coupling to the transport system. This chain is Zinc import ATP-binding protein ZnuC, found in Yersinia enterocolitica serotype O:8 / biotype 1B (strain NCTC 13174 / 8081).